The sequence spans 331 residues: Dof zinc finger protein DOF1.1 (331 aa).

A Dof-type zinc finger spans residues 77-131 (LKCPRCDSSNTKFCYYNNYNLTQPRHFCKGCRRYWTQGGALRNVPVGGGCRRNNK). Zn(2+) is bound by residues Cys79, Cys82, Cys104, and Cys107. Disordered regions lie at residues 121-166 (PVGG…TNHQ) and 291-331 (EEQP…NDLL). The span at 135–160 (NGNLKSSSSSSKQSSSVNAQSPSSGQ) shows a compositional bias: low complexity. The segment covering 305–316 (GLTSPGNQTNQY) has biased composition (polar residues).

Interacts with OBF4. Expressed in the vasculature (mainly in the phloem and associated cell files) of cotyledons, leaves, roots, flower stalks and petals. The PEAR proteins (e.g. DOF2.4, DOF5.1, DOF3.2, DOF1.1, DOF5.6 and DOF5.3) form a short-range concentration gradient that peaks at protophloem sieve elements (PSE).

The protein resides in the nucleus. Functionally, transcription factor that binds specifically to a 5'-AA[AG]G-3' consensus core sequence. Enhances the DNA binding of OBF transcription factors to OCS elements. Involved in the regulation of root development. The PEAR proteins (e.g. DOF2.4, DOF5.1, DOF3.2, DOF1.1, DOF5.6 and DOF5.3) activate gene expression that promotes radial growth of protophloem sieve elements. Element of a regulatory network controlling indole glucosinolates (IGS) biosynthesis, probably by inducing the expression of accurate genes (e.g. CYP83B1). Promotes apical dominance. The sequence is that of Dof zinc finger protein DOF1.1 from Arabidopsis thaliana (Mouse-ear cress).